The following is a 190-amino-acid chain: Pyridoxal 5'-phosphate synthase subunit PdxT (190 aa).

Gly-46–Ser-48 serves as a coordination point for L-glutamine. Cys-78 serves as the catalytic Nucleophile. Residues Arg-108 and Ile-137–Arg-138 each bind L-glutamine. Catalysis depends on charge relay system residues His-174 and Glu-176.

Belongs to the glutaminase PdxT/SNO family. In terms of assembly, in the presence of PdxS, forms a dodecamer of heterodimers. Only shows activity in the heterodimer.

It catalyses the reaction aldehydo-D-ribose 5-phosphate + D-glyceraldehyde 3-phosphate + L-glutamine = pyridoxal 5'-phosphate + L-glutamate + phosphate + 3 H2O + H(+). The catalysed reaction is L-glutamine + H2O = L-glutamate + NH4(+). Its pathway is cofactor biosynthesis; pyridoxal 5'-phosphate biosynthesis. Functionally, catalyzes the hydrolysis of glutamine to glutamate and ammonia as part of the biosynthesis of pyridoxal 5'-phosphate. The resulting ammonia molecule is channeled to the active site of PdxS. This chain is Pyridoxal 5'-phosphate synthase subunit PdxT, found in Chloroflexus aurantiacus (strain ATCC 29366 / DSM 635 / J-10-fl).